Here is a 491-residue protein sequence, read N- to C-terminus: Glycylpeptide N-tetradecanoyltransferase (491 aa).

Tetradecanoyl-CoA is bound at residue histidine 45 to tryptophan 48. Residues valine 53–valine 79 form a disordered region. Tetradecanoyl-CoA-binding positions include leucine 182–valine 184 and serine 190–alanine 194. Leucine 491 serves as the catalytic Proton acceptor; via carboxylate.

The protein belongs to the NMT family. In terms of assembly, monomer.

The protein resides in the cytoplasm. It catalyses the reaction N-terminal glycyl-[protein] + tetradecanoyl-CoA = N-tetradecanoylglycyl-[protein] + CoA + H(+). Adds a myristoyl group to the N-terminal glycine residue of certain cellular proteins. The protein is Glycylpeptide N-tetradecanoyltransferase of Cryptococcus neoformans (Filobasidiella neoformans).